The sequence spans 584 residues: DNA mismatch repair protein MutL (584 aa).

It belongs to the DNA mismatch repair MutL/HexB family.

This protein is involved in the repair of mismatches in DNA. It is required for dam-dependent methyl-directed DNA mismatch repair. May act as a 'molecular matchmaker', a protein that promotes the formation of a stable complex between two or more DNA-binding proteins in an ATP-dependent manner without itself being part of a final effector complex. This chain is DNA mismatch repair protein MutL, found in Buchnera aphidicola subsp. Acyrthosiphon pisum (strain 5A).